Reading from the N-terminus, the 117-residue chain is NADH-ubiquinone oxidoreductase chain 3 (117 aa).

3 helical membrane-spanning segments follow: residues 8–28, 61–81, and 86–106; these read LIYF…SFIF, LVAI…PWAV, and IGFF…IGFI.

This sequence belongs to the complex I subunit 3 family.

The protein localises to the mitochondrion membrane. It carries out the reaction a ubiquinone + NADH + 5 H(+)(in) = a ubiquinol + NAD(+) + 4 H(+)(out). In terms of biological role, core subunit of the mitochondrial membrane respiratory chain NADH dehydrogenase (Complex I) that is believed to belong to the minimal assembly required for catalysis. Complex I functions in the transfer of electrons from NADH to the respiratory chain. The immediate electron acceptor for the enzyme is believed to be ubiquinone. This is NADH-ubiquinone oxidoreductase chain 3 (ND3) from Tetraselmis subcordiformis (Marine green alga).